Consider the following 155-residue polypeptide: Large ribosomal subunit protein eL24 (155 aa).

A disordered region spans residues 87–155 (LELIKERRSQ…SFQKVKATSR (69 aa)). Residues 89 to 129 (LIKERRSQKPSDRKAARDSKLAKDKEAKKAAKAARKAEKAK) show a composition bias toward basic and acidic residues. The span at 130–143 (AVASGASVVSKQQA) shows a compositional bias: low complexity.

The protein belongs to the eukaryotic ribosomal protein eL24 family. As to quaternary structure, component of the large ribosomal subunit. Mature ribosomes consist of a small (40S) and a large (60S) subunit. The 40S subunit contains about 32 different proteins and 1 molecule of RNA (18S). The 60S subunit contains 45 different proteins and 3 molecules of RNA (25S, 5.8S and 5S).

It is found in the cytoplasm. Component of the ribosome, a large ribonucleoprotein complex responsible for the synthesis of proteins in the cell. The small ribosomal subunit (SSU) binds messenger RNAs (mRNAs) and translates the encoded message by selecting cognate aminoacyl-transfer RNA (tRNA) molecules. The large subunit (LSU) contains the ribosomal catalytic site termed the peptidyl transferase center (PTC), which catalyzes the formation of peptide bonds, thereby polymerizing the amino acids delivered by tRNAs into a polypeptide chain. The nascent polypeptides leave the ribosome through a tunnel in the LSU and interact with protein factors that function in enzymatic processing, targeting, and the membrane insertion of nascent chains at the exit of the ribosomal tunnel. The chain is Large ribosomal subunit protein eL24 from Candida albicans (strain SC5314 / ATCC MYA-2876) (Yeast).